The chain runs to 115 residues: Cell division protein FtsL (115 aa).

At 1 to 25 (MNTATRVIVAQNVRTRNRTFQITKQ) the chain is on the cytoplasmic side. The chain crosses the membrane as a helical span at residues 26–46 (GVVIVALVIALLCSAFGVVYF). Residues 47–115 (KDLNRRLFIQ…ILVNADAMIE (69 aa)) are Periplasmic-facing.

The protein belongs to the FtsL family. In terms of assembly, part of a complex composed of FtsB, FtsL and FtsQ.

Its subcellular location is the cell inner membrane. Its function is as follows. Essential cell division protein. May link together the upstream cell division proteins, which are predominantly cytoplasmic, with the downstream cell division proteins, which are predominantly periplasmic. In Coxiella burnetii (strain RSA 493 / Nine Mile phase I), this protein is Cell division protein FtsL.